We begin with the raw amino-acid sequence, 125 residues long: Snaclec botrocetin subunit beta (125 aa).

Disulfide bonds link C2/C13, C30/C121, and C98/C113. The 114-residue stretch at 9-122 (YEGHCYRFFK…CTRFKNFVCE (114 aa)) folds into the C-type lectin domain.

Belongs to the snaclec family. As to quaternary structure, heterodimer of subunits alpha and beta; disulfide-linked. Botrocetin and vWF form a soluble complex. Expressed by the venom gland.

The protein localises to the secreted. Its function is as follows. Snaclec that binds to von Willebrand factor (VWF) and induces its interaction with GPIbalpha (GP1BA) (via the vWF A1 domain), resulting in platelet aggregation. This Bothrops jararaca (Jararaca) protein is Snaclec botrocetin subunit beta.